Consider the following 291-residue polypeptide: ATP synthase gamma chain (291 aa).

It belongs to the ATPase gamma chain family. In terms of assembly, F-type ATPases have 2 components, CF(1) - the catalytic core - and CF(0) - the membrane proton channel. CF(1) has five subunits: alpha(3), beta(3), gamma(1), delta(1), epsilon(1). CF(0) has three main subunits: a, b and c.

It localises to the cell inner membrane. In terms of biological role, produces ATP from ADP in the presence of a proton gradient across the membrane. The gamma chain is believed to be important in regulating ATPase activity and the flow of protons through the CF(0) complex. The sequence is that of ATP synthase gamma chain from Neisseria meningitidis serogroup C (strain 053442).